Reading from the N-terminus, the 338-residue chain is uncharacterized protein (338 aa).

Helical transmembrane passes span 13–33 (PAYSHVLIAGGIGGATADFLM), 71–91 (GLYSGVCPMLIGSLPATALFF), 110–130 (TLCFLLAGFVGDLFASVVYVP), 176–196 (YGYRATILRDIPFSGFQLLFY), 218–238 (LITGSLAGAGAGFLTTPLDVA), and 301–321 (FRGFGPRIFWTSSQSSLMFVF). 3 Solcar repeats span residues 13-100 (PAYS…TKRH), 108-202 (PETL…LRQV), and 216-328 (RELI…IIRL).

This sequence belongs to the mitochondrial carrier (TC 2.A.29) family.

Its subcellular location is the mitochondrion inner membrane. Mitochondrial solute carriers shuttle metabolites, nucleotides, and cofactors through the mitochondrial inner membrane. This is an uncharacterized protein from Schizosaccharomyces pombe (strain 972 / ATCC 24843) (Fission yeast).